Reading from the N-terminus, the 132-residue chain is uncharacterized protein (132 aa).

The next 2 membrane-spanning stretches (helical) occupy residues 12–32 (VIGFVVLFCVLELVFYLKKLY) and 37–57 (LTLAVFGIFSLLFFLLYIPVL).

The protein localises to the cell membrane. This is an uncharacterized protein from Methanocaldococcus jannaschii (strain ATCC 43067 / DSM 2661 / JAL-1 / JCM 10045 / NBRC 100440) (Methanococcus jannaschii).